The primary structure comprises 425 residues: Light-independent protochlorophyllide reductase subunit N (425 aa).

3 residues coordinate [4Fe-4S] cluster: Cys-17, Cys-42, and Cys-103.

It belongs to the BchN/ChlN family. As to quaternary structure, protochlorophyllide reductase is composed of three subunits; ChlL, ChlN and ChlB. Forms a heterotetramer of two ChlB and two ChlN subunits. The cofactor is [4Fe-4S] cluster.

The enzyme catalyses chlorophyllide a + oxidized 2[4Fe-4S]-[ferredoxin] + 2 ADP + 2 phosphate = protochlorophyllide a + reduced 2[4Fe-4S]-[ferredoxin] + 2 ATP + 2 H2O. The protein operates within porphyrin-containing compound metabolism; chlorophyll biosynthesis (light-independent). Functionally, component of the dark-operative protochlorophyllide reductase (DPOR) that uses Mg-ATP and reduced ferredoxin to reduce ring D of protochlorophyllide (Pchlide) to form chlorophyllide a (Chlide). This reaction is light-independent. The NB-protein (ChlN-ChlB) is the catalytic component of the complex. This chain is Light-independent protochlorophyllide reductase subunit N, found in Synechococcus sp. (strain CC9605).